Here is a 692-residue protein sequence, read N- to C-terminus: MSCFSHVMNPITGENSWQEREDDYDYHQEVANAGFGDMLHDWERNQKYFAALRKTIKGMRAAGREVHVLDIGTGTGILSMMALKAGADSVTACEAFLPMANCAAKIFTDNGVGDKVQLIRKRSTDIKIGADLDMPQRANLLVAELLDTELIGEGAISIYNHAHAELLTDDALCIPARARCYAQVAQSPLASQWNSLKILPSLDGEALLRPPEQLKSCKGEAALHDVQLSQLPAGTFRLLTEPIEIFQLDFQRKEKREKQREKLVQLQASQPGAAELVFYWWDIQLDDQGEILLSCAPYWAHPELNELSASKEERVPVANVVPWRDHWMQAIYYVPKPPQLATAGQDFYLSCHHDEYSLWFDAMLEAPAKTVRRHTCSCDLHMTYSRSRIGQLNQAIRNKRYLRYLEATIVPKQSNVLVLGNGCMLGLASAALGAASVQLHEPHRFSRRLIDSIVQHNELKNVKYVENVEQLEDTELIALSHVFAEPYFLNAILPWDNFYFGTLLMKLKDKLPEKVEISPCEARIFALPVEFLDLHKIRAPVGSCEGFDLRLFDEMVERSAEQAVSLVEAQPLWEYPSRALAEPQQLLSVDFANFNVEHHLQGSIELTQSGVCNGIALWVDWHLDKTNNPKSIVSTGPSEAVVPGEFVKWDMFVRQGVHFPRKPTDLSGRVAWSTDFKPLLGQLNFGFSQEKR.

SAM-dependent MTase PRMT-type domains lie at 14–359 (ENSW…YSLW) and 368–692 (AKTV…QEKR).

This sequence belongs to the class I-like SAM-binding methyltransferase superfamily. Protein arginine N-methyltransferase family. PRMT7 subfamily.

Its function is as follows. Essential arginine methyltransferase that can both catalyze the formation of omega-N monomethylarginine (MMA) and symmetrical dimethylarginine (sDMA). Specifically mediates the symmetrical dimethylation of arginine residues in the small nuclear ribonucleoproteins SmD1 and SmD3. The protein is Protein arginine N-methyltransferase 7 (Art7) of Drosophila persimilis (Fruit fly).